The primary structure comprises 557 residues: Probable transcription factor sol4 (557 aa).

A fungal transcription factor domain region spans residues 26–186 (IQYFFEDINW…EREMRRRMFC (161 aa)). The disordered stretch occupies residues 463–490 (SGTQTRSMPSTETLTYNSSSSTSYGDGH). A compositionally biased stretch (low complexity) spans 472–485 (STETLTYNSSSSTS).

Its subcellular location is the nucleus. Its function is as follows. Probable transcription factor that regulates the expression of the gene cluster that mediates the biosynthesis of the phytotoxin solanapyrone, a causal agent of early blight disease of potato and tomato. This Alternaria solani protein is Probable transcription factor sol4 (sol4).